The following is a 176-amino-acid chain: Prion-like protein doppel (176 aa).

A signal peptide spans 1 to 25 (MRKHLSWWWLATVCMLLFSHLSAVQ). The interval 27-50 (RGIKHRIKWNRKALPSTAQITEAQ) is flexible tail. A glycan (O-linked (GalNAc...) threonine) is linked at T43. A globular region spans residues 51–152 (VAENRPGAFI…KHCEFWLERG (102 aa)). Cystine bridges form between C94-C145 and C108-C140. N-linked (GlcNAc...) asparagine glycans are attached at residues N98 and N110. Positions 122–139 (KPDNKLHQQVLWRLVQEL) are cu(2+) binding. The GPI-anchor amidated glycine moiety is linked to residue G152. Residues 153–176 (AGLRVTMHQPVLLCLLALIWLTVK) constitute a propeptide, removed in mature form.

It belongs to the prion family. N-glycosylated. N-glycosylated at two distinct sites. In terms of processing, O-glycosylated. Expressed in testis, in Sertoli cells, ejaculated spermatozoa and in seminal fluid (at protein level).

The protein resides in the cell membrane. Functionally, required for normal acrosome reaction and for normal male fertility. Can bind Cu(2+). The chain is Prion-like protein doppel (PRND) from Homo sapiens (Human).